Reading from the N-terminus, the 532-residue chain is Purple acid phosphatase 15 (532 aa).

The first 19 residues, 1 to 19 (MTFLLLLLFCFLSPAISSA), serve as a signal peptide directing secretion. N136 carries N-linked (GlcNAc...) asparagine glycosylation. D194 lines the Fe cation pocket. Residue N200 is glycosylated (N-linked (GlcNAc...) asparagine). The Fe cation site is built by D221 and Y224. D221 contributes to the Zn(2+) binding site. N-linked (GlcNAc...) asparagine glycosylation is found at N231 and N264. A Zn(2+)-binding site is contributed by N277. N277 contributes to the substrate binding site. 2 N-linked (GlcNAc...) asparagine glycosylation sites follow: N286 and N301. H359 provides a ligand contact to Zn(2+). H369 serves as the catalytic Proton donor. H396 lines the Zn(2+) pocket. 396-398 (HVH) contributes to the substrate binding site. H398 is a binding site for Fe cation. N-linked (GlcNAc...) asparagine glycosylation is present at N491.

The protein belongs to the metallophosphoesterase superfamily. Purple acid phosphatase family. As to quaternary structure, homodimer. Requires Fe cation as cofactor. Zn(2+) serves as cofactor. As to expression, expressed in roots, stems, cotyledons, leaves, flowers and siliques.

The protein resides in the secreted. The enzyme catalyses 1D-myo-inositol hexakisphosphate + H2O = 1D-myo-inositol 1,2,3,5,6-pentakisphosphate + phosphate. It carries out the reaction a phosphate monoester + H2O = an alcohol + phosphate. Functionally, acid phosphatase activity with p-nitrophenyl phosphate (pNPP), D-myoinositol 1-phosphate (Ins(1)P1), phytic acid and Myo-inositol hexakisphosphate. Low or no activity with Glc-6-P and ATP. Confers shoot growth stimulation, enhanced salt and osmotic stress tolerance, and ABA insensitivity. May modulate ascorbic acid (AsA) levels by controlling the input of myoinositol into this branch of AsA biosynthesis. The protein is Purple acid phosphatase 15 (PAP15) of Arabidopsis thaliana (Mouse-ear cress).